Here is a 582-residue protein sequence, read N- to C-terminus: DNA mismatch repair protein MutL (582 aa).

It belongs to the DNA mismatch repair MutL/HexB family.

Functionally, this protein is involved in the repair of mismatches in DNA. It is required for dam-dependent methyl-directed DNA mismatch repair. May act as a 'molecular matchmaker', a protein that promotes the formation of a stable complex between two or more DNA-binding proteins in an ATP-dependent manner without itself being part of a final effector complex. The sequence is that of DNA mismatch repair protein MutL from Acidiphilium cryptum (strain JF-5).